We begin with the raw amino-acid sequence, 890 residues long: MLLNMNLQELKQKYNYDVATKMMQQYLDIKFAHLDCLLLFRMGDFYEMFYEDAILASNVLGIALTKRGKNGEEEIAMCGVPYHALENYLTKLIEANYKVAICDQLETPEEAKNRGGYKAVVTRDVTRIITPGTIIEENLIASAEPNYLASLVIPKNKETASLCYVDLSTSEIVVVNVPETEILNELARLKPREILLSENLRSSNLADSIFKQLNFRITYQVDSFFAINKCEKIILDFYKMKDIKGIGEISSSQICAIGSVLEYLSLTQKQNIPHLPIPRIIKFHSYMTIDFSTRRNLEIVTNSQGGSQGSLLSTLNHTVTKQGGRLLYNFLSSPLTNIAKINHRLNITEFFYSNLEIVKKIRELLKKTSDIERCLTRITMNRSSGRDLLSIKYTLETATIIKGVFFDAYGFNLPDFIEKIIKPLSGDAELYNLIDETIREDAPNNLNDGGIIKHEYHPKVAQLHDLINNGKLYIEKLKDQYRKETGIDSLKISHNNVIGLFIDITAKNVNKILDPKFIHRQTTVNHVRYTTAELQKLESELVNAKTLVISLEKELYADICSQVIEKASYLRMLASSLSGLDVFCNFAYIADEYDYVKPEFTDDLSFDIVKGRHPVVEKALQRESKSFVYNDCHLSELERIWLITGPNMAGKSTFLRQNAIIAIIAQIGSFVPAKSAKIGVVDKIFSRIGAADDLIKGQSTFMAEMLETSAILAQSTKNSLIILDEVGRGTSTYDGVSIAWSVLEYIHDKLKCRCLFATHYHELTVMSNFLPALQNYTIAIEESGKDILFLHNIISGAADRSYGLHVAALAGLPASVINRAEQILLKFEKTSTGKGKNILSTESNNLSLFYLEPNKTTISSKLDKKFSTIDPDKLSPKEALELIYELKKLV.

Position 645–652 (645–652 (GPNMAGKS)) interacts with ATP.

It belongs to the DNA mismatch repair MutS family.

In terms of biological role, this protein is involved in the repair of mismatches in DNA. It is possible that it carries out the mismatch recognition step. This protein has a weak ATPase activity. The chain is DNA mismatch repair protein MutS from Rickettsia conorii (strain ATCC VR-613 / Malish 7).